Reading from the N-terminus, the 195-residue chain is Apoptosis-associated speck-like protein containing a CARD (195 aa).

A Pyrin domain is found at 1–91; the sequence is MGRARDAILD…AGQLQAATHQ (91 aa). Glycyl lysine isopeptide (Lys-Gly) (interchain with G-Cter in ubiquitin) cross-links involve residues lysine 55 and lysine 174. Residues 107 to 195 enclose the CARD domain; it reads AAKPGLHFID…SYLVEDLERS (89 aa). At serine 195 the chain carries Phosphoserine.

In terms of assembly, self-associates; enforced oligomerization induces apoptosis, NF-kappa-B regulation and interleukin-1 beta secretion. Homooligomers can form disk-like particles of approximately 12 nm diameter and approximately 1 nm height. Next to isoform 1, also isoform 2 and isoform 3 may be involved in oligomerization leading to functional regulation. Component of several inflammasomes containing one pattern recognition receptor/sensor, such as NLRP1, NLRP2, NLRP3, NLRP6, NLRC4, AIM2, MEFV or NOD2, and probably NLRC4, NLRP12 or IFI16. Major component of the ASC pyroptosome, a 1-2 um supramolecular assembly (one per macrophage cell) which consists of oligomerized PYCARD dimers and CASP1. Interacts with CASP1 (precursor form); the interaction induces activation of CASP1 leading to the processing of interleukin-1 beta; PYCARD competes with RIPK2 for binding to CASP1. Interacts with NLRP3; the interaction requires the homooligomerization of NLRP3. Interacts with NLRP2, NLRC4, MEFV, CARD16, AIM2, IFI16, NOD2, RIGI, RIPK2, PYDC1, PYDC2, NLRP10, CASP8, CHUK, IKBKB and BAX. Component of the AIM2 PANoptosome complex, a multiprotein complex that drives inflammatory cell death (PANoptosis). Post-translationally, phosphorylated. In terms of processing, 'Lys-63'-linked polyubiquitination by TRAF3 is critical for speck formation and inflammasome activation. 'Lys-63'-linked deubiquitinated by USP50; a crucial step for NLRP3-mediated inflammasome activation. 'Lys-63'-linked polyubiquitination by PELI1 is also critical for speck formation and inflammasome activation. Deubiquitinated by USP3 that cleaves 'Lys-48'-linked ubiquitin chains and strengthens its stability by blocking proteasomal degradation. Widely expressed at low levels. Detected in peripheral blood leukocytes, lung, small intestine, spleen, thymus, colon and at lower levels in placenta, liver and kidney. Very low expression in skeletal muscle, heart and brain. Expressed in lung epithelial cells (at protein level). Detected in the leukemia cell lines HL-60 and U-937, but not in Jurkat T-cell lymphoma and Daudi Burkitt's lymphoma. Detected in the melanoma cell line WM35, but not in WM793. Not detected in HeLa cervical carcinoma cells and MOLT-4 lymphocytic leukemia cells.

The protein localises to the cytoplasm. It is found in the inflammasome. It localises to the endoplasmic reticulum. The protein resides in the mitochondrion. Its subcellular location is the nucleus. The protein localises to the golgi apparatus membrane. Functions as a key mediator in apoptosis and inflammation. Promotes caspase-mediated apoptosis involving predominantly caspase-8 and also caspase-9 in a probable cell type-specific manner. Involved in activation of the mitochondrial apoptotic pathway, promotes caspase-8-dependent proteolytic maturation of BID independently of FADD in certain cell types and also mediates mitochondrial translocation of BAX and activates BAX-dependent apoptosis coupled to activation of caspase-9, -2 and -3. Involved in innate immune response by acting as an integral adapter in the assembly of various inflammasomes (NLRP1, NLRP2, NLRP3, NLRP6, AIM2 and probably IFI16) which recruit and activate caspase-1 leading to processing and secretion of pro-inflammatory cytokines. Caspase-1-dependent inflammation leads to macrophage pyroptosis, a form of cell death. The function as activating adapter in different types of inflammasomes is mediated by the pyrin and CARD domains and their homotypic interactions. Clustered PYCARD nucleates the formation of caspase-1 filaments through the interaction of their respective CARD domains, acting as a platform for of caspase-1 polymerization. In the NLRP1 and NLRC4 inflammasomes seems not be required but facilitates the processing of procaspase-1. In cooperation with NOD2 involved in an inflammasome activated by bacterial muramyl dipeptide leading to caspase-1 activation. May be involved in RIGI-triggered pro-inflammatory responses and inflammasome activation. In collaboration with AIM2 which detects cytosolic double-stranded DNA may also be involved in a caspase-1-independent cell death that involves caspase-8. In adaptive immunity may be involved in maturation of dendritic cells to stimulate T-cell immunity and in cytoskeletal rearrangements coupled to chemotaxis and antigen uptake may be involved in post-transcriptional regulation of the guanine nucleotide exchange factor DOCK2; the latter function is proposed to involve the nuclear form. Also involved in transcriptional activation of cytokines and chemokines independent of the inflammasome; this function may involve AP-1, NF-kappa-B, MAPK and caspase-8 signaling pathways. For regulation of NF-kappa-B activating and inhibiting functions have been reported. Modulates NF-kappa-B induction at the level of the IKK complex by inhibiting kinase activity of CHUK and IKBK. Proposed to compete with RIPK2 for association with CASP1 thereby down-regulating CASP1-mediated RIPK2-dependent NF-kappa-B activation and activating interleukin-1 beta processing. Modulates host resistance to DNA virus infection, probably by inducing the cleavage of and inactivating CGAS in presence of cytoplasmic double-stranded DNA. Its function is as follows. May have a regulating effect on the function as inflammasome adapter. In terms of biological role, seems to inhibit inflammasome-mediated maturation of interleukin-1 beta. The protein is Apoptosis-associated speck-like protein containing a CARD of Homo sapiens (Human).